A 374-amino-acid polypeptide reads, in one-letter code: 5-hydroxytryptamine receptor 1D (374 aa).

N-linked (GlcNAc...) asparagine glycosylation is found at N5, N17, and N21. The next 3 helical transmembrane spans lie at 36–61 (ISLV…TTIL), 73–94 (LIGS…ISIA), and 107–131 (LCDI…VIAL). C108 and C185 are joined by a disulfide. Residues D115 and C119 each contribute to the serotonin site. The short motif at 132–134 (DRY) is the DRY motif; important for ligand-induced conformation changes element. The next 4 helical transmembrane spans lie at 152-173 (AAAM…PLFW), 192-215 (ISYT…ILYG), 298-323 (KTLG…VLPI), and 333-356 (ALFD…YTVF). Position 318 (S318) interacts with serotonin. The NPxxY motif; important for ligand-induced conformation changes and signaling signature appears at 349–353 (NPVIY).

This sequence belongs to the G-protein coupled receptor 1 family. In terms of assembly, homodimer. Heterodimer with HTR1B. In terms of tissue distribution, detected in dorsal raphe.

The protein resides in the cell membrane. Functionally, G-protein coupled receptor for 5-hydroxytryptamine (serotonin). Also functions as a receptor for ergot alkaloid derivatives, various anxiolytic and antidepressant drugs and other psychoactive substances. Ligand binding causes a conformation change that triggers signaling via guanine nucleotide-binding proteins (G proteins) and modulates the activity of downstream effectors, such as adenylate cyclase. HTR1D is coupled to G(i)/G(o) G alpha proteins and mediates inhibitory neurotransmission by inhibiting adenylate cyclase activity. Regulates the release of 5-hydroxytryptamine in the brain, and thereby affects neural activity. May also play a role in regulating the release of other neurotransmitters. May play a role in vasoconstriction. This Rattus norvegicus (Rat) protein is 5-hydroxytryptamine receptor 1D (Htr1d).